The following is a 484-amino-acid chain: Bifunctional protein GlmU (484 aa).

The segment at 1-240 (MSASRPAAVM…RTEVEGVNDR (240 aa)) is pyrophosphorylase. UDP-N-acetyl-alpha-D-glucosamine contacts are provided by residues 12 to 15 (LAAG), K26, Q79, and 84 to 85 (GT). D113 is a binding site for Mg(2+). UDP-N-acetyl-alpha-D-glucosamine is bound by residues G150, E165, N180, and N238. N238 serves as a coordination point for Mg(2+). The segment at 241–261 (VQLAEARRLLNARLLEQLMRD) is linker. Positions 262-484 (GVTVVDPAST…RARARSEEDR (223 aa)) are N-acetyltransferase. Positions 343 and 361 each coordinate UDP-N-acetyl-alpha-D-glucosamine. H373 acts as the Proton acceptor in catalysis. Y376 and N387 together coordinate UDP-N-acetyl-alpha-D-glucosamine. Acetyl-CoA-binding positions include A390, 396-397 (NY), S415, and A433. Positions 457 to 484 (EGWVERKRPGTPAAQAAERARARSEEDR) are disordered. Over residues 474–484 (ERARARSEEDR) the composition is skewed to basic and acidic residues.

In the N-terminal section; belongs to the N-acetylglucosamine-1-phosphate uridyltransferase family. The protein in the C-terminal section; belongs to the transferase hexapeptide repeat family. In terms of assembly, homotrimer. Requires Mg(2+) as cofactor.

The protein resides in the cytoplasm. It carries out the reaction alpha-D-glucosamine 1-phosphate + acetyl-CoA = N-acetyl-alpha-D-glucosamine 1-phosphate + CoA + H(+). It catalyses the reaction N-acetyl-alpha-D-glucosamine 1-phosphate + UTP + H(+) = UDP-N-acetyl-alpha-D-glucosamine + diphosphate. Its pathway is nucleotide-sugar biosynthesis; UDP-N-acetyl-alpha-D-glucosamine biosynthesis; N-acetyl-alpha-D-glucosamine 1-phosphate from alpha-D-glucosamine 6-phosphate (route II): step 2/2. It participates in nucleotide-sugar biosynthesis; UDP-N-acetyl-alpha-D-glucosamine biosynthesis; UDP-N-acetyl-alpha-D-glucosamine from N-acetyl-alpha-D-glucosamine 1-phosphate: step 1/1. The protein operates within bacterial outer membrane biogenesis; LPS lipid A biosynthesis. Catalyzes the last two sequential reactions in the de novo biosynthetic pathway for UDP-N-acetylglucosamine (UDP-GlcNAc). The C-terminal domain catalyzes the transfer of acetyl group from acetyl coenzyme A to glucosamine-1-phosphate (GlcN-1-P) to produce N-acetylglucosamine-1-phosphate (GlcNAc-1-P), which is converted into UDP-GlcNAc by the transfer of uridine 5-monophosphate (from uridine 5-triphosphate), a reaction catalyzed by the N-terminal domain. The chain is Bifunctional protein GlmU from Thermobifida fusca (strain YX).